The sequence spans 224 residues: Cytidylate kinase (224 aa).

11 to 19 (GPAAAGKST) is an ATP binding site.

The protein belongs to the cytidylate kinase family. Type 1 subfamily.

The protein resides in the cytoplasm. It catalyses the reaction CMP + ATP = CDP + ADP. The catalysed reaction is dCMP + ATP = dCDP + ADP. This is Cytidylate kinase from Listeria monocytogenes serotype 4b (strain CLIP80459).